A 685-amino-acid polypeptide reads, in one-letter code: Polyphosphate kinase (685 aa).

Residue asparagine 45 coordinates ATP. Mg(2+) contacts are provided by arginine 375 and arginine 405. Histidine 435 (phosphohistidine intermediate) is an active-site residue. Positions 468, 564, and 592 each coordinate ATP.

The protein belongs to the polyphosphate kinase 1 (PPK1) family. Mg(2+) serves as cofactor. In terms of processing, an intermediate of this reaction is the autophosphorylated ppk in which a phosphate is covalently linked to a histidine residue through a N-P bond.

It carries out the reaction [phosphate](n) + ATP = [phosphate](n+1) + ADP. Catalyzes the reversible transfer of the terminal phosphate of ATP to form a long-chain polyphosphate (polyP). This is Polyphosphate kinase from Neisseria gonorrhoeae (strain ATCC 700825 / FA 1090).